Reading from the N-terminus, the 177-residue chain is MLPLSLLRTGQGHQIMVELKNGETYNGLLVNCDNWMNINLKNVIRTSKDSDKFWKIQSCYIRGNTIKYISVPDEIIDLVAEEEQTLRTTYQQRNDSNRGRGRGDGFAGRGRGDASGRGRGDNSYRGGRGGGNNNSGGGDSSPAGRGRGEYRGSSRGGRGDFRGSSRGGRGGNNNSTA.

A Sm domain is found at 2-75 (LPLSLLRTGQ…IKYISVPDEI (74 aa)). The interval 87 to 177 (RTTYQQRNDS…GRGGNNNSTA (91 aa)) is disordered. Basic and acidic residues predominate over residues 110 to 122 (GRGDASGRGRGDN). Residues 126 to 139 (GGRGGGNNNSGGGD) show a composition bias toward gly residues. Residues 146-163 (GRGEYRGSSRGGRGDFRG) are compositionally biased toward basic and acidic residues.

Belongs to the snRNP Sm proteins family. In terms of assembly, component of the precatalytic spliceosome (spliceosome B complex). Component of the U4/U6-U5 tri-snRNP complex, a building block of the precatalytic spliceosome (spliceosome B complex). LSM2, LSM3, LSM4, LSM5, LSM6, LSM7 and LSM8 form a heptameric, ring-shaped subcomplex (the LSM2-8 complex) that is part of the U4/U6-U5 tri-snRNP complex and the precatalytic spliceosome.

It is found in the nucleus. Plays a role in pre-mRNA splicing as component of the U4/U6-U5 tri-snRNP complex that is involved in spliceosome assembly, and as component of the precatalytic spliceosome (spliceosome B complex). The heptameric LSM2-8 complex binds specifically to the 3'-terminal U-tract of U6 snRNA. The chain is Probable U6 snRNA-associated Sm-like protein LSm4 (lsm4) from Dictyostelium discoideum (Social amoeba).